A 1928-amino-acid chain; its full sequence is Myosin-1 (1928 aa).

The 64-residue stretch at 8-71 folds into the Myosin N-terminal SH3-like domain; that stretch reads SSNMIVWIPD…RISDVFPVNP (64 aa). The Myosin motor domain maps to 75 to 791; that stretch reads DKVENMSELT…VLADLEKQKD (717 aa). An ATP-binding site is contributed by 180–187; that stretch reads GESGAGKT. The actin-binding stretch occupies residues 460-529; it reads IGLLDIAGFE…LQLTIDLIES (70 aa). Positions 629-641 are enriched in polar residues; the sequence is SSSAGVEANISNQ. Residues 629-657 form a disordered region; sequence SSSAGVEANISNQEVKKSARTSTFKTTSS. Residues 794–823 enclose the IQ domain; that stretch reads LNNIMIKLTATIRGYTVRKEITYHLQKLKK. Positions 856–1911 form a coiled coil; the sequence is SSNDMTRTKK…FWKSRYESTM (1056 aa).

The protein belongs to the TRAFAC class myosin-kinesin ATPase superfamily. Myosin family.

Required for cell division. The protein is Myosin-1 (MYO1) of Saccharomyces cerevisiae (strain ATCC 204508 / S288c) (Baker's yeast).